A 478-amino-acid chain; its full sequence is Trigger factor (478 aa).

A disordered region spans residues 1–41 (MAELADAPDLGSGARKGVRVRLPPPAPHKNGGKNESRGSGQ). One can recognise a PPIase FKBP-type domain in the interval 197 to 279 (GDMLVVEYEV…IKEIKKKVLP (83 aa)). Over residues 455-472 (VEQKQEEEKKEEKEEVKN) the composition is skewed to basic and acidic residues. A disordered region spans residues 455-478 (VEQKQEEEKKEEKEEVKNESQGNT).

It belongs to the FKBP-type PPIase family. Tig subfamily.

Its subcellular location is the cytoplasm. The catalysed reaction is [protein]-peptidylproline (omega=180) = [protein]-peptidylproline (omega=0). In terms of biological role, involved in protein export. Acts as a chaperone by maintaining the newly synthesized protein in an open conformation. Functions as a peptidyl-prolyl cis-trans isomerase. The sequence is that of Trigger factor from Aquifex aeolicus (strain VF5).